Consider the following 262-residue polypeptide: MALGETKGIILFTKDFKEKDKLVKIFTESYGKLMFFVKGAHRKNNPLLPAILPFTEAVYIGNFREEGLSFLNSSKEVQPFRNIQQDIFINAYGTYILNLVDAAIEDQHYDPNLFQFTHMALSALNEQKDPEIITNIFEIQLLERFGVRPEWHHCVACGETQGKFDYSSKYSGVLCEKHWHLDEQRYHADPRAIHFIRLFSQVSYEKVQNIQVKEETKKSIRETIDMLYDEYVGLHLKSKKFIDQMKTWENTLKIPPRKKEEK.

This sequence belongs to the RecO family.

Involved in DNA repair and RecF pathway recombination. This chain is DNA repair protein RecO, found in Enterococcus faecalis (strain ATCC 700802 / V583).